The sequence spans 239 residues: Protein GrpE (239 aa).

2 disordered regions span residues 1-54 (MIEN…ELKN) and 208-239 (SMGP…SEDV). The segment covering 19-42 (QDNALENVSSAQELTTENNELSSQ) has biased composition (polar residues). Residues 43-53 (KTEEINTEELK) show a composition bias toward basic and acidic residues. A compositionally biased stretch (acidic residues) spans 228 to 239 (DIDSEENTSEDV).

It belongs to the GrpE family. As to quaternary structure, homodimer.

It is found in the cytoplasm. Its function is as follows. Participates actively in the response to hyperosmotic and heat shock by preventing the aggregation of stress-denatured proteins, in association with DnaK and GrpE. It is the nucleotide exchange factor for DnaK and may function as a thermosensor. Unfolded proteins bind initially to DnaJ; upon interaction with the DnaJ-bound protein, DnaK hydrolyzes its bound ATP, resulting in the formation of a stable complex. GrpE releases ADP from DnaK; ATP binding to DnaK triggers the release of the substrate protein, thus completing the reaction cycle. Several rounds of ATP-dependent interactions between DnaJ, DnaK and GrpE are required for fully efficient folding. The chain is Protein GrpE from Prochlorococcus marinus (strain AS9601).